We begin with the raw amino-acid sequence, 409 residues long: MKYITVLGSTGSIGTQTLEIVRELPNKFKVVALSAGRNIDLLTEQVSQHKPEVIAIDDENLLTDLKNNINNLGISNPPIVLGGREAINSVAAWDSADTVITGIVGCAGLIPTMSAIKASKNIALANKETLIAAGSVVIPALKENKSRLLPADSEHSAIFQCIQGLPNYENADFVTGQIPNGLKAIHLTASGGAFRDWAVEDLKNVTVEDATSHPNWSMGRKITVDSATLMNKGLEVIEAHYLFGTPYQNIEIVIHPQSIIHSMIEMEDSSVLAQLGWPDMKLPILYAMSWPERFRTNWKRFNLTEIGQLTFKKPDEVKYPCMGLAYSAGKCSGTMPAVLNAANEMAVDQFLKEKISFQEIPTFINKTCEAHINKLNLNPNLEDILEVDNWARIFVQEEIKKGKKYINVE.

Residues threonine 10, glycine 11, serine 12, isoleucine 13, glycine 36, arginine 37, asparagine 38, and asparagine 126 each coordinate NADPH. Lysine 127 lines the 1-deoxy-D-xylulose 5-phosphate pocket. An NADPH-binding site is contributed by glutamate 128. Aspartate 152 is a Mn(2+) binding site. 4 residues coordinate 1-deoxy-D-xylulose 5-phosphate: serine 153, glutamate 154, serine 190, and histidine 213. Mn(2+) is bound at residue glutamate 154. Glycine 219 contacts NADPH. 1-deoxy-D-xylulose 5-phosphate-binding residues include serine 226, asparagine 231, lysine 232, and glutamate 235. Glutamate 235 contacts Mn(2+).

This sequence belongs to the DXR family. It depends on Mg(2+) as a cofactor. Mn(2+) serves as cofactor.

It carries out the reaction 2-C-methyl-D-erythritol 4-phosphate + NADP(+) = 1-deoxy-D-xylulose 5-phosphate + NADPH + H(+). The protein operates within isoprenoid biosynthesis; isopentenyl diphosphate biosynthesis via DXP pathway; isopentenyl diphosphate from 1-deoxy-D-xylulose 5-phosphate: step 1/6. Functionally, catalyzes the NADPH-dependent rearrangement and reduction of 1-deoxy-D-xylulose-5-phosphate (DXP) to 2-C-methyl-D-erythritol 4-phosphate (MEP). The sequence is that of 1-deoxy-D-xylulose 5-phosphate reductoisomerase from Prochlorococcus marinus (strain MIT 9515).